We begin with the raw amino-acid sequence, 154 residues long: Large ribosomal subunit protein uL13 (154 aa).

The protein belongs to the universal ribosomal protein uL13 family. In terms of assembly, part of the 50S ribosomal subunit.

Functionally, this protein is one of the early assembly proteins of the 50S ribosomal subunit, although it is not seen to bind rRNA by itself. It is important during the early stages of 50S assembly. The polypeptide is Large ribosomal subunit protein uL13 (Rhizobium meliloti (strain 1021) (Ensifer meliloti)).